The sequence spans 2139 residues: U5 small nuclear ribonucleoprotein 200 kDa helicase (2139 aa).

Ser17 and Ser26 each carry phosphoserine. The disordered stretch occupies residues 39 to 80; that stretch reads EVLSLVGKLEGTRMGDKAQRTKPQMQEERRAKRRKRDEDRHD. Residue Lys46 forms a Glycyl lysine isopeptide (Lys-Gly) (interchain with G-Cter in SUMO2) linkage. Positions 48–80 are enriched in basic and acidic residues; that stretch reads EGTRMGDKAQRTKPQMQEERRAKRRKRDEDRHD. Positions 54 to 84 form a coiled coil; the sequence is DKAQRTKPQMQEERRAKRRKRDEDRHDINKM. Ser225 bears the Phosphoserine mark. At Thr389 the chain carries Phosphothreonine. The interval 395–2132 is interaction with C9orf78 and WBP4; the sequence is DLDQGGEALA…YKFSVDVKEA (1738 aa). A Helicase ATP-binding 1 domain is found at 490–673; that stretch reads RAALETDENL…FLRVDPAKGL (184 aa). 503-510 is an ATP binding site; that stretch reads APTGAGKT. Residues 615 to 618 carry the DEAH box motif; the sequence is DEIH. The Helicase C-terminal 1 domain occupies 684-921; that stretch reads PLEQTYVGIT…NAKDAVNWLG (238 aa). Tyr709 is modified (phosphotyrosine). Lys944 is covalently cross-linked (Glycyl lysine isopeptide (Lys-Gly) (interchain with G-Cter in SUMO)). N6-acetyllysine; alternate is present on Lys971. Residue Lys971 forms a Glycyl lysine isopeptide (Lys-Gly) (interchain with G-Cter in SUMO); alternate linkage. Residues 982-1289 form the SEC63 1 domain; sequence TELGRIASHY…SCETQLPVSF (308 aa). Glycyl lysine isopeptide (Lys-Gly) (interchain with G-Cter in SUMO) cross-links involve residues Lys1071 and Lys1199. The tract at residues 1285 to 2139 is interaction with TSSC4; the sequence is LPVSFRHLIL…KEAETDSDSD (855 aa). The Helicase ATP-binding 2 domain maps to 1340 to 1515; sequence NTVYNSDDNV…WLGCSATSTF (176 aa). 1353–1360 provides a ligand contact to ATP; it reads APTGSGKT. Phosphothreonine is present on Thr1431. The DEAH box signature appears at 1457 to 1460; the sequence is DEVH. One can recognise a Helicase C-terminal 2 domain in the interval 1548-1756; that stretch reads PVYHAITKHS…TIENKQDAVD (209 aa). Thr1768 carries the phosphothreonine modification. The SEC63 2 domain occupies 1815-2127; sequence PLNLGMIAAY…GCDQEYKFSV (313 aa). Ser2005 bears the Phosphoserine mark. A Glycyl lysine isopeptide (Lys-Gly) (interchain with G-Cter in SUMO) cross-link involves residue Lys2094. Thr2134 carries the phosphothreonine modification. A phosphoserine mark is found at Ser2136 and Ser2138.

It belongs to the helicase family. SKI2 subfamily. As to quaternary structure, component of a core complex containing at least PRPF8, SNRNP200, EFTUD2 and SNRNP40. Component of the U5 snRNP and U4/U6-U5 tri-snRNP complexes, building blocks of the spliceosome. Component of the U4/U6-U5 tri-snRNP complex composed of the U4, U6 and U5 snRNAs and at least PRPF3, PRPF4, PRPF6, PRPF8, PRPF31, SNRNP200, TXNL4A, SNRNP40, DDX23, CD2BP2, PPIH, SNU13, EFTUD2, SART1 and USP39. Component of precatalytic, catalytic and postcatalytic spliceosomal complexes. Component of the minor spliceosome, which splices U12-type introns. Interacts with C9orf78; the interaction is direct and mutually exclusive with its interaction with WBP4. Interacts with WBP4; the interaction is mutually exclusive with its interaction with C9orf78. Interacts with PRPF8. Interacts with TSSC4; the interaction is direct, excludes recruitment of C9ORF78 and WBP4 to SNRNP200 and negatively regulates its RNA helicase activity.

It is found in the nucleus. The catalysed reaction is ATP + H2O = ADP + phosphate + H(+). In terms of biological role, catalyzes the ATP-dependent unwinding of U4/U6 RNA duplices, an essential step in the assembly of a catalytically active spliceosome. Plays a role in pre-mRNA splicing as core component of precatalytic, catalytic and postcatalytic spliceosomal complexes. As a component of the minor spliceosome, involved in the splicing of U12-type introns in pre-mRNAs. Involved in spliceosome assembly, activation and disassembly. Mediates changes in the dynamic network of RNA-RNA interactions in the spliceosome. The sequence is that of U5 small nuclear ribonucleoprotein 200 kDa helicase (Snrnp200) from Rattus norvegicus (Rat).